Here is a 212-residue protein sequence, read N- to C-terminus: Adenylate kinase (212 aa).

10 to 15 provides a ligand contact to ATP; that stretch reads GAGKGT. An NMP region spans residues 30 to 59; the sequence is AIGDIFRTIIKTSTSEAELINNYVRQGELI. Residues Arg-36, 57 to 59, 85 to 88, and Gln-92 each bind AMP; these read ELI and GYPR. Residues 122-160 are LID; the sequence is GRYSCKNCGKIYNRYFLQPKTDNVCDVCGSSTFDYRKDD. Residue Arg-123 participates in ATP binding. Positions 126 and 129 each coordinate Zn(2+). 132-133 contacts ATP; sequence IY. Cys-146 and Cys-149 together coordinate Zn(2+). Arg-157 and Arg-168 together coordinate AMP. Lys-196 is a binding site for ATP.

Belongs to the adenylate kinase family. As to quaternary structure, monomer.

Its subcellular location is the cytoplasm. The enzyme catalyses AMP + ATP = 2 ADP. Its pathway is purine metabolism; AMP biosynthesis via salvage pathway; AMP from ADP: step 1/1. In terms of biological role, catalyzes the reversible transfer of the terminal phosphate group between ATP and AMP. Plays an important role in cellular energy homeostasis and in adenine nucleotide metabolism. The chain is Adenylate kinase from Rickettsia rickettsii (strain Iowa).